The chain runs to 296 residues: Mycothiol acetyltransferase (296 aa).

2 consecutive N-acetyltransferase domains span residues 1-148 (MTEW…IRVD) and 151-296 (VTVR…YGRA). Glu-34 provides a ligand contact to 1D-myo-inositol 2-(L-cysteinylamino)-2-deoxy-alpha-D-glucopyranoside. Acetyl-CoA-binding positions include 79 to 81 (LVV) and 87 to 92 (RRGIGS). Residues Glu-178, Lys-219, and Glu-229 each coordinate 1D-myo-inositol 2-(L-cysteinylamino)-2-deoxy-alpha-D-glucopyranoside. Residues 233 to 235 (VGV) and 240 to 246 (QGRGLGH) each bind acetyl-CoA. Tyr-267 lines the 1D-myo-inositol 2-(L-cysteinylamino)-2-deoxy-alpha-D-glucopyranoside pocket. 272 to 277 (NQAALR) contacts acetyl-CoA.

It belongs to the acetyltransferase family. MshD subfamily. As to quaternary structure, monomer.

The catalysed reaction is 1D-myo-inositol 2-(L-cysteinylamino)-2-deoxy-alpha-D-glucopyranoside + acetyl-CoA = mycothiol + CoA + H(+). Catalyzes the transfer of acetyl from acetyl-CoA to desacetylmycothiol (Cys-GlcN-Ins) to form mycothiol. In Mycobacteroides abscessus (strain ATCC 19977 / DSM 44196 / CCUG 20993 / CIP 104536 / JCM 13569 / NCTC 13031 / TMC 1543 / L948) (Mycobacterium abscessus), this protein is Mycothiol acetyltransferase.